The primary structure comprises 176 residues: Nuclear ribonuclease Z (176 aa).

It belongs to the RNase Z family. In terms of assembly, homodimer. Requires Zn(2+) as cofactor.

It localises to the nucleus. It carries out the reaction Endonucleolytic cleavage of RNA, removing extra 3' nucleotides from tRNA precursor, generating 3' termini of tRNAs. A 3'-hydroxy group is left at the tRNA terminus and a 5'-phosphoryl group is left at the trailer molecule.. Functionally, zinc phosphodiesterase, which displays some tRNA 3'-processing endonuclease activity. Probably involved in tRNA maturation, by removing a 3'-trailer from precursor tRNA. The polypeptide is Nuclear ribonuclease Z (ELAC) (Triticum aestivum (Wheat)).